A 161-amino-acid chain; its full sequence is Regulator of ribonuclease activity A (161 aa).

This sequence belongs to the RraA family. Homotrimer. Binds to both RNA-binding sites in the C-terminal region of Rne and to RhlB.

Its subcellular location is the cytoplasm. Its function is as follows. Globally modulates RNA abundance by binding to RNase E (Rne) and regulating its endonucleolytic activity. Can modulate Rne action in a substrate-dependent manner by altering the composition of the degradosome. Modulates RNA-binding and helicase activities of the degradosome. The sequence is that of Regulator of ribonuclease activity A from Shewanella sediminis (strain HAW-EB3).